Reading from the N-terminus, the 309-residue chain is UDP-N-acetylenolpyruvoylglucosamine reductase (309 aa).

The 166-residue stretch at 34–199 (RVGGPAQVLF…TSARLRGTPA (166 aa)) folds into the FAD-binding PCMH-type domain. Residue Arg-179 is part of the active site. Ser-228 serves as the catalytic Proton donor. The active site involves Glu-298.

The protein belongs to the MurB family. The cofactor is FAD.

The protein resides in the cytoplasm. It carries out the reaction UDP-N-acetyl-alpha-D-muramate + NADP(+) = UDP-N-acetyl-3-O-(1-carboxyvinyl)-alpha-D-glucosamine + NADPH + H(+). It functions in the pathway cell wall biogenesis; peptidoglycan biosynthesis. Functionally, cell wall formation. The polypeptide is UDP-N-acetylenolpyruvoylglucosamine reductase (Rhodopseudomonas palustris (strain ATCC BAA-98 / CGA009)).